We begin with the raw amino-acid sequence, 997 residues long: Serine-repeat antigen protein 5 (997 aa).

Positions 1 to 22 are cleaved as a signal peptide; that stretch reads MKSYISLFFILCVIFNKNVIKC. 2 disordered regions span residues 26–107 and 181–252; these read SQTG…EKQD and LPSN…PRNL. Residues 30–51 are compositionally biased toward gly residues; it reads NTGGGQAGNTGGDQAGSTGGSP. Residues 52–67 are compositionally biased toward low complexity; sequence QGSTGASPQGSTGASP. Polar residues predominate over residues 68–84; the sequence is QGSTGASQPGSSEPSNP. Low complexity-rich tracts occupy residues 85–103, 183–196, and 205–235; these read VSSG…STSS, SNGT…STGT, and SDSS…SSES. At Ser-183 the chain carries Phosphoserine. A glycan (N-linked (GlcNAc...) asparagine) is linked at Asn-184. The segment at 216-253 is interaction with PTKL; that stretch reads SSSSSSSSSSSSSSSSSSESLPANGPDSPTVKPPRNLQ. Asn-318 is a glycosylation site (N-linked (GlcNAc...) asparagine). The interaction with host VTN stretch occupies residues 373 to 390; sequence YKYLSEDIVSKFKEIKAE. Residues Cys-445 and Cys-497 are joined by a disulfide bond. Residue Thr-549 is modified to Phosphothreonine; by CPK1. 5 cysteine pairs are disulfide-bonded: Cys-567/Cys-572, Cys-581/Cys-610, Cys-593/Cys-636, Cys-627/Cys-672, and Cys-755/Cys-809. A thiol-protease-like region spans residues 579–997; it reads NNCISNLQVE…TNNECYFCYV (419 aa). Catalysis depends on residues His-762 and Asn-787. Asn-828 carries an N-linked (GlcNAc...) asparagine glycan. The propeptide at 843–886 is inhibition peptide; the sequence is KASPEFYHNLYFKNFNVGKKNLFSEKEDNENNKKLGNNYIIFGQ. Residue Ser-866 is modified to Phosphoserine.

This sequence belongs to the peptidase C1 family. May interact (via C-terminus) with PTKL (via SAM domain). As to quaternary structure, interacts (via C-terminus) with human VTN (via hemopexin repeat 2); may form heterotetramers of two VTN and SERA5 P47 heterodimers; the interaction may protect merozoites from phagocytosis by host monocytes; VTN glycosylation appears to be dispensable for the interaction. In terms of assembly, monomer. Interacts with kinase CPK1/CDPK1 at the schizont stage. In terms of processing, phosphorylation by CPK1/CDPK1 increases SERA5 protease activity towards a synthetic peptide in vitro. Post-translationally, just prior to merozoite egress from host erythrocytes, proteolytically cleaved into multiple fragments. Cleaved by SUB1 into p47 and p73, p73 is further cleaved by SUB1 into p56 and p18 and p56 is further processed into p50 by an unidentified protease. p47 remains covalently associated with p18 via disulfide bond. p47 can be processed into p25n and p25c by SUB1. p25c and p25n remain associated with p18. Proteolytic processing is essential for merozoite egress from host erythrocytes. The cleavage of the propeptide to produce p50 is necessary for protease activity and to promote merozoite egress.

The protein resides in the parasitophorous vacuole. It is found in the secreted. Its subcellular location is the cell membrane. Functionally, plays an essential role during the asexual blood stage development by controlling the kinetics of merozoite egress from host erythrocytes. Specifically, prevents premature rupture of the parasitophorous vacuole and host erythrocyte membranes. May prevent merozoite phagocytosis by host monocytes via interaction with host VTN at the merozoite surface. Plays a role in parasite growth. Its function is as follows. Protease activity is controversial. Has been shown in a number of studies to have protease activity towards a synthetic peptide in vitro. Has also been shown to lack protease activity towards a synthetic peptide in vitro. In Plasmodium falciparum (isolate 3D7), this protein is Serine-repeat antigen protein 5.